A 277-amino-acid chain; its full sequence is Large ribosomal subunit protein uL2 (277 aa).

The tract at residues 222 to 258 is disordered; it reads GSVMNPCDHPHGGGEGRSPIGRPSPVTPWGKPALGYK.

Belongs to the universal ribosomal protein uL2 family. Part of the 50S ribosomal subunit. Forms a bridge to the 30S subunit in the 70S ribosome.

Functionally, one of the primary rRNA binding proteins. Required for association of the 30S and 50S subunits to form the 70S ribosome, for tRNA binding and peptide bond formation. It has been suggested to have peptidyltransferase activity; this is somewhat controversial. Makes several contacts with the 16S rRNA in the 70S ribosome. This chain is Large ribosomal subunit protein uL2, found in Clostridium perfringens (strain 13 / Type A).